A 430-amino-acid chain; its full sequence is Adenylosuccinate synthetase (430 aa).

GTP-binding positions include 12–18 (GDEGKGK) and 40–42 (GHT). D13 functions as the Proton acceptor in the catalytic mechanism. Positions 13 and 40 each coordinate Mg(2+). Residues 13 to 16 (DEGK), 38 to 41 (NAGH), T128, R142, Q223, T238, and R302 each bind IMP. H41 acts as the Proton donor in catalysis. A substrate-binding site is contributed by 298–304 (TTTGRPR). Residues R304, 330-332 (SID), and 412-414 (SVG) each bind GTP.

Belongs to the adenylosuccinate synthetase family. In terms of assembly, homodimer. It depends on Mg(2+) as a cofactor.

The protein localises to the cytoplasm. The enzyme catalyses IMP + L-aspartate + GTP = N(6)-(1,2-dicarboxyethyl)-AMP + GDP + phosphate + 2 H(+). Its pathway is purine metabolism; AMP biosynthesis via de novo pathway; AMP from IMP: step 1/2. Plays an important role in the de novo pathway of purine nucleotide biosynthesis. Catalyzes the first committed step in the biosynthesis of AMP from IMP. The polypeptide is Adenylosuccinate synthetase (Bacillus licheniformis (strain ATCC 14580 / DSM 13 / JCM 2505 / CCUG 7422 / NBRC 12200 / NCIMB 9375 / NCTC 10341 / NRRL NRS-1264 / Gibson 46)).